A 1604-amino-acid polypeptide reads, in one-letter code: Transposon Ty1-DR4 Gag-Pol polyprotein (1604 aa).

3 stretches are compositionally biased toward polar residues: residues 1 to 23 (MESQQLSQHSPISHGSACASVTS), 48 to 60 (TKANSQQTTTPAS), and 127 to 152 (QSQFPQYPSSVGTPLSTPSPESGNTF). Disordered regions lie at residues 1–93 (MESQ…MMTQ), 126–174 (PQSQ…PPPM), and 352–421 (GSRN…SKST). Residues 153-165 (TDSSSADSDMTST) show a composition bias toward low complexity. The interval 299 to 401 (NNGIHINNKV…NSKSKTARAH (103 aa)) is RNA-binding. Residues 402-418 (NVSTSNNSPSTDNDSIS) are compositionally biased toward low complexity. Residue serine 416 is modified to Phosphoserine. Catalysis depends on aspartate 461, which acts as the For protease activity; shared with dimeric partner. Residues 583–640 (NVHTSESTRKYPYPFIHRMLAHANAQTIRYSLKNNTITYFNESDVDWSSAIDYQCPDC) form an integrase-type zinc finger-like region. Residues 660 to 835 (NSYEPFQYLH…AGLDISTLLP (176 aa)) enclose the Integrase catalytic domain. Aspartate 671 and aspartate 736 together coordinate Mg(2+). 3 disordered regions span residues 956 to 1087 (SKAV…ETEK), 1092 to 1111 (RSPSIDASPPENNSSHNIVP), and 1130 to 1187 (DLPL…DNET). The span at 960–969 (SPTDSTPPST) shows a compositional bias: low complexity. Residues 1005-1015 (STPQISNIEST) are compositionally biased toward polar residues. Residues 1038 to 1053 (ESSHASKSKDFRHSDS) show a composition bias toward basic and acidic residues. Polar residues-rich tracts occupy residues 1054 to 1082 (YSENETNHTNVPISSTGGTNNKTVPQISD) and 1101 to 1111 (PENNSSHNIVP). The short motif at 1178 to 1212 (KKRSLEDNETEIKVSRDTWNTKNMRSLEPPRSKKR) is the Bipartite nuclear localization signal element. Residues 1338-1476 (NNYYITQLDI…DILGLEIKYQ (139 aa)) form the Reverse transcriptase Ty1/copia-type domain. 3 residues coordinate Mg(2+): aspartate 1346, aspartate 1427, and aspartate 1428.

The capsid protein forms a homotrimer, from which the VLPs are assembled. The protease is a homodimer, whose active site consists of two apposed aspartic acid residues. Post-translationally, initially, virus-like particles (VLPs) are composed of the structural unprocessed proteins Gag and Gag-Pol, and also contain the host initiator methionine tRNA (tRNA(i)-Met) which serves as a primer for minus-strand DNA synthesis, and a dimer of genomic Ty RNA. Processing of the polyproteins occurs within the particle and proceeds by an ordered pathway, called maturation. First, the protease (PR) is released by autocatalytic cleavage of the Gag-Pol polyprotein yielding capsid protein p45 and a Pol-p154 precursor protein. This cleavage is a prerequisite for subsequent processing of Pol-p154 at the remaining sites to release the mature structural and catalytic proteins. Maturation takes place prior to the RT reaction and is required to produce transposition-competent VLPs.

Its subcellular location is the cytoplasm. It localises to the nucleus. It catalyses the reaction DNA(n) + a 2'-deoxyribonucleoside 5'-triphosphate = DNA(n+1) + diphosphate. It carries out the reaction Endonucleolytic cleavage to 5'-phosphomonoester.. Capsid protein (CA) is the structural component of the virus-like particle (VLP), forming the shell that encapsulates the retrotransposons dimeric RNA genome. The particles are assembled from trimer-clustered units and there are holes in the capsid shells that allow for the diffusion of macromolecules. CA also has nucleocapsid-like chaperone activity, promoting primer tRNA(i)-Met annealing to the multipartite primer-binding site (PBS), dimerization of Ty1 RNA and initiation of reverse transcription. In terms of biological role, the aspartyl protease (PR) mediates the proteolytic cleavages of the Gag and Gag-Pol polyproteins after assembly of the VLP. Its function is as follows. Reverse transcriptase/ribonuclease H (RT) is a multifunctional enzyme that catalyzes the conversion of the retro-elements RNA genome into dsDNA within the VLP. The enzyme displays a DNA polymerase activity that can copy either DNA or RNA templates, and a ribonuclease H (RNase H) activity that cleaves the RNA strand of RNA-DNA heteroduplexes during plus-strand synthesis and hydrolyzes RNA primers. The conversion leads to a linear dsDNA copy of the retrotransposon that includes long terminal repeats (LTRs) at both ends. Functionally, integrase (IN) targets the VLP to the nucleus, where a subparticle preintegration complex (PIC) containing at least integrase and the newly synthesized dsDNA copy of the retrotransposon must transit the nuclear membrane. Once in the nucleus, integrase performs the integration of the dsDNA into the host genome. This chain is Transposon Ty1-DR4 Gag-Pol polyprotein (TY1B-DR4), found in Saccharomyces cerevisiae (strain ATCC 204508 / S288c) (Baker's yeast).